The following is a 310-amino-acid chain: Acetylglutamate kinase (310 aa).

Residues 74 to 75, Arg96, and Asn201 contribute to the substrate site; that span reads GG.

The protein belongs to the acetylglutamate kinase family. ArgB subfamily.

The protein resides in the cytoplasm. It catalyses the reaction N-acetyl-L-glutamate + ATP = N-acetyl-L-glutamyl 5-phosphate + ADP. The protein operates within amino-acid biosynthesis; L-arginine biosynthesis; N(2)-acetyl-L-ornithine from L-glutamate: step 2/4. Its function is as follows. Catalyzes the ATP-dependent phosphorylation of N-acetyl-L-glutamate. The protein is Acetylglutamate kinase of Arthrobacter sp. (strain FB24).